Here is a 447-residue protein sequence, read N- to C-terminus: Dual specificity protein phosphatase CDC14C (447 aa).

Positions 14–168 (PQDDVYVDIT…AMQYGFLNFN (155 aa)) are a. The tract at residues 169 to 182 (SFNLDEYEHYEKAE) is linker. Residues 183-349 (NGDLNWIIPD…EGDYFRQRLK (167 aa)) are b. Positions 184–344 (GDLNWIIPDR…TSLWLEGDYF (161 aa)) constitute a Tyrosine-protein phosphatase domain. Cys-284 acts as the Phosphocysteine intermediate in catalysis. Residues 426 to 446 (FTLCSVVIWWIVCDYILPILL) traverse the membrane as a helical segment.

The protein belongs to the protein-tyrosine phosphatase family. Non-receptor class CDC14 subfamily.

Its subcellular location is the endoplasmic reticulum membrane. The enzyme catalyses O-phospho-L-tyrosyl-[protein] + H2O = L-tyrosyl-[protein] + phosphate. The catalysed reaction is O-phospho-L-seryl-[protein] + H2O = L-seryl-[protein] + phosphate. It carries out the reaction O-phospho-L-threonyl-[protein] + H2O = L-threonyl-[protein] + phosphate. Functionally, dual-specificity phosphatase. Preferentially dephosphorylates proteins modified by proline-directed kinases. The protein is Dual specificity protein phosphatase CDC14C of Homo sapiens (Human).